The primary structure comprises 452 residues: Glucose-6-phosphate isomerase (452 aa).

The Proton donor role is filled by E290. Active-site residues include H311 and K425.

Belongs to the GPI family.

It localises to the cytoplasm. The enzyme catalyses alpha-D-glucose 6-phosphate = beta-D-fructose 6-phosphate. Its pathway is carbohydrate biosynthesis; gluconeogenesis. It functions in the pathway carbohydrate degradation; glycolysis; D-glyceraldehyde 3-phosphate and glycerone phosphate from D-glucose: step 2/4. In terms of biological role, catalyzes the reversible isomerization of glucose-6-phosphate to fructose-6-phosphate. In Limosilactobacillus reuteri (strain DSM 20016) (Lactobacillus reuteri), this protein is Glucose-6-phosphate isomerase.